We begin with the raw amino-acid sequence, 396 residues long: Phosphoglycerate kinase (396 aa).

Residues 21–23, arginine 36, 59–62, arginine 118, and arginine 151 each bind substrate; these read DLN and HFGR. ATP contacts are provided by residues lysine 201, glutamate 323, and 353–356; that span reads GGDT.

It belongs to the phosphoglycerate kinase family. Monomer.

It is found in the cytoplasm. It carries out the reaction (2R)-3-phosphoglycerate + ATP = (2R)-3-phospho-glyceroyl phosphate + ADP. Its pathway is carbohydrate degradation; glycolysis; pyruvate from D-glyceraldehyde 3-phosphate: step 2/5. The chain is Phosphoglycerate kinase from Rhodospirillum centenum (strain ATCC 51521 / SW).